Here is a 231-residue protein sequence, read N- to C-terminus: Large ribosomal subunit protein uL1 (231 aa).

It belongs to the universal ribosomal protein uL1 family. As to quaternary structure, part of the 50S ribosomal subunit.

Functionally, binds directly to 23S rRNA. The L1 stalk is quite mobile in the ribosome, and is involved in E site tRNA release. Protein L1 is also a translational repressor protein, it controls the translation of the L11 operon by binding to its mRNA. This Stutzerimonas stutzeri (strain A1501) (Pseudomonas stutzeri) protein is Large ribosomal subunit protein uL1.